Reading from the N-terminus, the 66-residue chain is Small ribosomal subunit protein bS21 (66 aa).

This sequence belongs to the bacterial ribosomal protein bS21 family.

This is Small ribosomal subunit protein bS21 from Bdellovibrio bacteriovorus (strain ATCC 15356 / DSM 50701 / NCIMB 9529 / HD100).